Reading from the N-terminus, the 350-residue chain is Homeobox-leucine zipper protein HOX5 (350 aa).

Residues 83-142 (APEKKRRLTAEQVQMLERSFEEENKLEPERKTELARRLGMAPRQVAVWFQNRRARWKTKQ) constitute a DNA-binding region (homeobox). Residues 141–185 (KQLEHDFDRLKAAYDALAADHHALLSDNDRLRAQVISLTEKLQDK) are leucine-zipper. The disordered stretch occupies residues 180-254 (EKLQDKETSP…TNDDGDGGGA (75 aa)). Positions 188–198 (SPSSATITTAA) are enriched in low complexity.

Belongs to the HD-ZIP homeobox family. Class I subfamily. Homodimer. May form a heterodimer with HOX4. Expressed in seedlings, roots, leaves, nodes, internodes, flowers and embryo.

The protein resides in the nucleus. In terms of biological role, probable transcription activator that binds to the DNA sequence 5'-CAAT[AT]ATTG-3'. The chain is Homeobox-leucine zipper protein HOX5 (HOX5) from Oryza sativa subsp. indica (Rice).